We begin with the raw amino-acid sequence, 416 residues long: MIHPDPTLFGHDPWWLILAKAVGVFVFLVLTVLAAILIERKVLGRMQMRFGPNRVGPKGLLQSLADGIKLALKEGITPAGVDKPVYLLAPVISVIPAFLAFAVIPMGGEVSVFGHRTALQLTDLAVAVLYILAVTSVGVYGIVLAGWASGSTYPLLGGLRSSAQVVSYEIAMALSFATVFLYAGTMSTSGIVAAQTSTWYVFLLLPSFLVYVTSMVGETNRAPFDLPEAEGELVGGFHTEYSSLKFAMFMLAEYVNMTTVSALATTMFLGGWHAPWPISLWEGANSGWWPLLWFTAKVWVFLFVYIWLRGTLPRLRYDQFMAIGWKMLIPVSLAWIMIVATAHSLRTTGHGGWASGLLIAGTVLTFGLAVVLWRTMRFRADRTVPARTAADVFPIPPIPGRAGAARTPESRETTDA.

The next 9 membrane-spanning stretches (helical) occupy residues 16 to 36 (LILAKAVGVFVFLVLTVLAAI), 84 to 104 (PVYLLAPVISVIPAFLAFAVI), 124 to 144 (LAVAVLYILAVTSVGVYGIVL), 165 to 185 (VVSYEIAMALSFATVFLYAGT), 197 to 217 (STWYVFLLLPSFLVYVTSMVG), 260 to 280 (VSALATTMFLGGWHAPWPISL), 288 to 308 (WWPLLWFTAKVWVFLFVYIWL), 320 to 340 (FMAIGWKMLIPVSLAWIMIVA), and 353 to 373 (WASGLLIAGTVLTFGLAVVLW).

Belongs to the complex I subunit 1 family. As to quaternary structure, NDH-1 is composed of 14 different subunits. Subunits NuoA, H, J, K, L, M, N constitute the membrane sector of the complex.

Its subcellular location is the cell membrane. The catalysed reaction is a quinone + NADH + 5 H(+)(in) = a quinol + NAD(+) + 4 H(+)(out). NDH-1 shuttles electrons from NADH, via FMN and iron-sulfur (Fe-S) centers, to quinones in the respiratory chain. The immediate electron acceptor for the enzyme in this species is believed to be menaquinone. Couples the redox reaction to proton translocation (for every two electrons transferred, four hydrogen ions are translocated across the cytoplasmic membrane), and thus conserves the redox energy in a proton gradient. This subunit may bind ubiquinone. The polypeptide is NADH-quinone oxidoreductase subunit H (Mycobacterium sp. (strain JLS)).